Here is a 251-residue protein sequence, read N- to C-terminus: Imidazole glycerol phosphate synthase subunit HisF (251 aa).

Residues Asp11 and Asp130 contribute to the active site.

It belongs to the HisA/HisF family. In terms of assembly, heterodimer of HisH and HisF.

The protein resides in the cytoplasm. It catalyses the reaction 5-[(5-phospho-1-deoxy-D-ribulos-1-ylimino)methylamino]-1-(5-phospho-beta-D-ribosyl)imidazole-4-carboxamide + L-glutamine = D-erythro-1-(imidazol-4-yl)glycerol 3-phosphate + 5-amino-1-(5-phospho-beta-D-ribosyl)imidazole-4-carboxamide + L-glutamate + H(+). It functions in the pathway amino-acid biosynthesis; L-histidine biosynthesis; L-histidine from 5-phospho-alpha-D-ribose 1-diphosphate: step 5/9. IGPS catalyzes the conversion of PRFAR and glutamine to IGP, AICAR and glutamate. The HisF subunit catalyzes the cyclization activity that produces IGP and AICAR from PRFAR using the ammonia provided by the HisH subunit. This chain is Imidazole glycerol phosphate synthase subunit HisF, found in Pelodictyon phaeoclathratiforme (strain DSM 5477 / BU-1).